Consider the following 46-residue polypeptide: Large ribosomal subunit protein bL36 (46 aa).

It belongs to the bacterial ribosomal protein bL36 family.

The sequence is that of Large ribosomal subunit protein bL36 from Salmonella agona (strain SL483).